The primary structure comprises 417 residues: UDP-N-acetylglucosamine 1-carboxyvinyltransferase (417 aa).

Residue 22-23 (KN) participates in phosphoenolpyruvate binding. Arginine 93 contributes to the UDP-N-acetyl-alpha-D-glucosamine binding site. Cysteine 117 acts as the Proton donor in catalysis. Position 117 is a 2-(S-cysteinyl)pyruvic acid O-phosphothioketal (cysteine 117). Residues 122-126 (RPVDQ), aspartate 304, and isoleucine 326 each bind UDP-N-acetyl-alpha-D-glucosamine.

The protein belongs to the EPSP synthase family. MurA subfamily.

Its subcellular location is the cytoplasm. The enzyme catalyses phosphoenolpyruvate + UDP-N-acetyl-alpha-D-glucosamine = UDP-N-acetyl-3-O-(1-carboxyvinyl)-alpha-D-glucosamine + phosphate. It functions in the pathway cell wall biogenesis; peptidoglycan biosynthesis. Its function is as follows. Cell wall formation. Adds enolpyruvyl to UDP-N-acetylglucosamine. This chain is UDP-N-acetylglucosamine 1-carboxyvinyltransferase, found in Neisseria meningitidis serogroup A / serotype 4A (strain DSM 15465 / Z2491).